A 554-amino-acid polypeptide reads, in one-letter code: MAAADLSHGHYLSGDPVCLHEEKTPAGRIVADCLTDCYQDSVTFDDVAVDFTQEEWTLLDSTQRSLYSDVMLENYKNLATVGGQIIKPSLISWLEQEESRTVQGGVLQGWEMRLETQWSILQQDFLRGQTSIGIQLEGKHNGRELCDCEQCGEVFSEHSCLKTHVRTQSTGNTHDCNQYGKDFLTLCEKTSTGEKLSEFNQSEKIFSLTPNIVYQRTSTQEKSFECSHCGKSFINESYLQAHMRTHNGEKLYEWRNYGPGFIDSTSLSVLIETLNAKKPYKCKECGKGYRYPAYLSIHMRTHTGEKPYECKECGKAFNYSNSFQIHGRTHTGEKPYVCKECGKAFTQYSGLSMHVRSHSGDKPYECKECGKSFLTSSRLIQHIRTHTGEKPFVCVECGKAFAVSSNLSGHLRTHTEEKACECKICGKVFGYPSCLNNHMRTHSAQKPYTCKECGKAFNYSTHLKIHMRIHTGEKPYECKQCGKAFSHSSSFQIHERTHTGEKPYECKECGKAFTCSSSFRIHEKTHTEEKPYKCQQCGKAYSHPRSLRRHEQIH.

Positions 42–112 (VTFDDVAVDF…QGGVLQGWEM (71 aa)) constitute a KRAB domain. The C2H2-type 1; atypical zinc finger occupies 146–174 (CDCEQCGEVFSEHSCLKTHVRTQSTGNTH). C2H2-type zinc fingers lie at residues 224–246 (FECSHCGKSFINESYLQAHMRTH), 280–302 (YKCKECGKGYRYPAYLSIHMRTH), 308–330 (YECKECGKAFNYSNSFQIHGRTH), 336–358 (YVCKECGKAFTQYSGLSMHVRSH), 364–386 (YECKECGKSFLTSSRLIQHIRTH), 392–414 (FVCVECGKAFAVSSNLSGHLRTH), 420–442 (CECKICGKVFGYPSCLNNHMRTH), 448–470 (YTCKECGKAFNYSTHLKIHMRIH), 476–498 (YECKQCGKAFSHSSSFQIHERTH), 504–526 (YECKECGKAFTCSSSFRIHEKTH), and 532–554 (YKCQQCGKAYSHPRSLRRHEQIH).

The protein localises to the nucleus. Its function is as follows. May be involved in transcriptional regulation. The chain is Zinc finger protein 426 (ZNF426) from Homo sapiens (Human).